A 272-amino-acid chain; its full sequence is Putative hydro-lyase RPB_3621 (272 aa).

It belongs to the D-glutamate cyclase family.

This Rhodopseudomonas palustris (strain HaA2) protein is Putative hydro-lyase RPB_3621.